The sequence spans 253 residues: Major prion protein (253 aa).

Positions 1–22 (MANLGCWMLVLFVATWSDLGLC) are cleaved as a signal peptide. An interaction with GRB2, ERI3 and SYN1 region spans residues 23-230 (KKRPKPGGWN…ESQAYYQRGS (208 aa)). The interval 26-108 (PKPGGWNTGG…WNKPSKPKTS (83 aa)) is disordered. A run of 5 repeats spans residues 51 to 59 (PQGGGGWGQ), 60 to 67 (PHGGGWGQ), 68 to 75 (PHGGGWGQ), 76 to 83 (PHGGGWGQ), and 84 to 91 (PHGGGWGQ). Residues 51-91 (PQGGGGWGQPHGGGWGQPHGGGWGQPHGGGWGQPHGGGWGQ) form a 5 X 8 AA tandem repeats of P-H-G-G-G-W-G-Q region. The span at 52 to 95 (QGGGGWGQPHGGGWGQPHGGGWGQPHGGGWGQPHGGGWGQGGGT) shows a compositional bias: gly residues. 12 residues coordinate Cu(2+): histidine 61, glycine 62, glycine 63, histidine 69, glycine 70, glycine 71, histidine 77, glycine 78, glycine 79, histidine 85, glycine 86, and glycine 87. Cysteines 179 and 214 form a disulfide. 2 N-linked (GlcNAc...) asparagine glycosylation sites follow: asparagine 181 and asparagine 197. Serine 230 carries GPI-anchor amidated serine lipidation. The propeptide at 231–253 (SMVFFSSPPVILLISFLIFLIVG) is removed in mature form.

Belongs to the prion family. As to quaternary structure, monomer and homodimer. Has a tendency to aggregate into amyloid fibrils containing a cross-beta spine, formed by a steric zipper of superposed beta-strands. Soluble oligomers may represent an intermediate stage on the path to fibril formation. Copper binding may promote oligomerization. Interacts with GRB2, APP, ERI3/PRNPIP and SYN1. Mislocalized cytosolically exposed PrP interacts with MGRN1; this interaction alters MGRN1 subcellular location and causes lysosomal enlargement. Interacts with KIAA1191.

The protein localises to the cell membrane. The protein resides in the golgi apparatus. Its primary physiological function is unclear. Has cytoprotective activity against internal or environmental stresses. May play a role in neuronal development and synaptic plasticity. May be required for neuronal myelin sheath maintenance. May play a role in iron uptake and iron homeostasis. Soluble oligomers are toxic to cultured neuroblastoma cells and induce apoptosis (in vitro). Association with GPC1 (via its heparan sulfate chains) targets PRNP to lipid rafts. Also provides Cu(2+) or Zn(2+) for the ascorbate-mediated GPC1 deaminase degradation of its heparan sulfate side chains. This is Major prion protein (PRNP) from Trachypithecus francoisi (Francois' leaf monkey).